The chain runs to 191 residues: Cell division protein SepF (191 aa).

A compositionally biased stretch (low complexity) spans 150 to 164 (TSSSPEEASPSSVST). The interval 150–191 (TSSSPEEASPSSVSTENTPQYSLGKNTTPEPAWGNSKLSAYS) is disordered. Over residues 165 to 178 (ENTPQYSLGKNTTP) the composition is skewed to polar residues.

Belongs to the SepF family. In terms of assembly, homodimer. Interacts with FtsZ.

It localises to the cytoplasm. Functionally, cell division protein that is part of the divisome complex and is recruited early to the Z-ring. Probably stimulates Z-ring formation, perhaps through the cross-linking of FtsZ protofilaments. Its function overlaps with FtsA. This is Cell division protein SepF from Prochlorococcus marinus (strain AS9601).